The primary structure comprises 432 residues: UDP-N-acetylmuramate--L-alanine ligase (432 aa).

Gly-108 to Ser-114 is a binding site for ATP.

It belongs to the MurCDEF family.

It is found in the cytoplasm. The enzyme catalyses UDP-N-acetyl-alpha-D-muramate + L-alanine + ATP = UDP-N-acetyl-alpha-D-muramoyl-L-alanine + ADP + phosphate + H(+). It functions in the pathway cell wall biogenesis; peptidoglycan biosynthesis. Its function is as follows. Cell wall formation. The sequence is that of UDP-N-acetylmuramate--L-alanine ligase from Bacillus licheniformis (strain ATCC 14580 / DSM 13 / JCM 2505 / CCUG 7422 / NBRC 12200 / NCIMB 9375 / NCTC 10341 / NRRL NRS-1264 / Gibson 46).